Consider the following 242-residue polypeptide: Small ribosomal subunit protein uS3 (242 aa).

A KH type-2 domain is found at 39–110 (IRKFIHKKYG…QVRINVVEVE (72 aa)). The interval 221 to 242 (GASPRRRASRRPQQFEDRSNEG) is disordered. A compositionally biased stretch (basic and acidic residues) spans 233–242 (QQFEDRSNEG).

It belongs to the universal ribosomal protein uS3 family. As to quaternary structure, part of the 30S ribosomal subunit. Forms a tight complex with proteins S10 and S14.

In terms of biological role, binds the lower part of the 30S subunit head. Binds mRNA in the 70S ribosome, positioning it for translation. In Parasynechococcus marenigrum (strain WH8102), this protein is Small ribosomal subunit protein uS3.